The chain runs to 173 residues: Lipoprotein signal peptidase (173 aa).

A run of 4 helical transmembrane segments spans residues 7 to 27 (FFWFTALLSLLLDHLTKLWVV), 41 to 61 (LWPGVFHLTYVTNTGAAFSLF), 70 to 90 (WLSLGVSVGLMALAILGPNFN), and 95 to 115 (AGYGFLLGGAAGNGIDRFVAG). Catalysis depends on residues D119 and D135. Residues 130–150 (IFNLADVFINIGIICLLIAAW) form a helical membrane-spanning segment.

Belongs to the peptidase A8 family.

It is found in the cell inner membrane. It catalyses the reaction Release of signal peptides from bacterial membrane prolipoproteins. Hydrolyzes -Xaa-Yaa-Zaa-|-(S,diacylglyceryl)Cys-, in which Xaa is hydrophobic (preferably Leu), and Yaa (Ala or Ser) and Zaa (Gly or Ala) have small, neutral side chains.. It functions in the pathway protein modification; lipoprotein biosynthesis (signal peptide cleavage). Functionally, this protein specifically catalyzes the removal of signal peptides from prolipoproteins. The protein is Lipoprotein signal peptidase of Cyanothece sp. (strain PCC 7425 / ATCC 29141).